The sequence spans 175 residues: Probable DNA replication complex GINS protein PSF2 (175 aa).

The protein belongs to the GINS2/PSF2 family. As to quaternary structure, component of the GINS complex which is a heterotetramer of SLD5, PSF1, PSF2 and PSF3.

The protein resides in the nucleus. Functionally, the GINS complex plays an essential role in the initiation of DNA replication. In Encephalitozoon cuniculi (strain GB-M1) (Microsporidian parasite), this protein is Probable DNA replication complex GINS protein PSF2.